We begin with the raw amino-acid sequence, 300 residues long: tRNA dimethylallyltransferase (300 aa).

Glycine 18 to serine 25 provides a ligand contact to ATP. Threonine 20–serine 25 is a substrate binding site. The segment at aspartate 43–glutamine 46 is interaction with substrate tRNA.

It belongs to the IPP transferase family. In terms of assembly, monomer. The cofactor is Mg(2+).

The enzyme catalyses adenosine(37) in tRNA + dimethylallyl diphosphate = N(6)-dimethylallyladenosine(37) in tRNA + diphosphate. Catalyzes the transfer of a dimethylallyl group onto the adenine at position 37 in tRNAs that read codons beginning with uridine, leading to the formation of N6-(dimethylallyl)adenosine (i(6)A). The protein is tRNA dimethylallyltransferase of Cyanothece sp. (strain PCC 7425 / ATCC 29141).